We begin with the raw amino-acid sequence, 225 residues long: 2-amino-5-formylamino-6-ribosylaminopyrimidin-4(3H)-one 5'-monophosphate deformylase (225 aa).

E28, H30, D39, and H107 together coordinate Fe cation.

It belongs to the creatininase superfamily. FAPy deformylase family. In terms of assembly, homodimer. The cofactor is Fe(2+). Requires Zn(2+) as cofactor.

It carries out the reaction 2-amino-5-formylamino-6-(5-phospho-D-ribosylamino)pyrimidin-4(3H)-one + H2O = 2,5-diamino-6-(1-D-ribosylamino)pyrimidin-4(3H)-one 5'-phosphate + formate + H(+). The protein operates within cofactor biosynthesis; coenzyme F420 biosynthesis. Its pathway is cofactor biosynthesis; riboflavin biosynthesis. Catalyzes the hydrolysis of the formamide of 2-amino-5-formylamino-6-ribosylamino-4(3H)-pyrimidinone 5'-monophosphate (FAPy) to form 2,5-diamino-6-ribosylamino-4(3H)-pyrimidinone 5'-phosphate (APy). This Methanocaldococcus sp. (strain FS406-22) protein is 2-amino-5-formylamino-6-ribosylaminopyrimidin-4(3H)-one 5'-monophosphate deformylase.